A 1597-amino-acid chain; its full sequence is Pentafunctional AROM polypeptide (1597 aa).

Positions 1–384 are 3-dehydroquinate synthase; the sequence is MGVPTKISIL…HEPRASTVSN (384 aa). NAD(+)-binding positions include 44–46, 81–84, 114–116, and D119; these read DTN, ESSK, and GGV. R130 contributes to the 7-phospho-2-dehydro-3-deoxy-D-arabino-heptonate binding site. Residue 139–140 coordinates NAD(+); the sequence is TT. Residues D146 and K152 each coordinate 7-phospho-2-dehydro-3-deoxy-D-arabino-heptonate. K161 provides a ligand contact to NAD(+). N162 lines the 7-phospho-2-dehydro-3-deoxy-D-arabino-heptonate pocket. Residues 179–182 and N190 contribute to the NAD(+) site; that span reads FLNT. E194 serves as a coordination point for Zn(2+). 7-phospho-2-dehydro-3-deoxy-D-arabino-heptonate-binding positions include 194–197 and K250; that span reads EVIK. The active-site Proton acceptor; for 3-dehydroquinate synthase activity is E260. 7-phospho-2-dehydro-3-deoxy-D-arabino-heptonate is bound by residues 264-268 and H271; that span reads RNLLN. H271 contributes to the Zn(2+) binding site. H275 functions as the Proton acceptor; for 3-dehydroquinate synthase activity in the catalytic mechanism. Residues H287 and K356 each coordinate 7-phospho-2-dehydro-3-deoxy-D-arabino-heptonate. H287 provides a ligand contact to Zn(2+). Residues 397-842 are EPSP synthase; that stretch reads VSPGVPKNLN…WDSLAQTFKV (446 aa). C824 acts as the For EPSP synthase activity in catalysis. The shikimate kinase stretch occupies residues 866 to 1057; that stretch reads ASIFIIGMRG…RSKENTFFVS (192 aa). 872 to 879 contributes to the ATP binding site; the sequence is GMRGAGKT. Residues 1058–1278 form a 3-dehydroquinase region; sequence LTLPDLAPAA…AAPGQLSARE (221 aa). Catalysis depends on H1181, which acts as the Proton acceptor; for 3-dehydroquinate dehydratase activity. Catalysis depends on K1209, which acts as the Schiff-base intermediate with substrate; for 3-dehydroquinate dehydratase activity. The shikimate dehydrogenase stretch occupies residues 1291-1597; that stretch reads SKKFAVIGNP…VQPKDDDIST (307 aa).

The protein in the N-terminal section; belongs to the sugar phosphate cyclases superfamily. Dehydroquinate synthase family. In the 2nd section; belongs to the EPSP synthase family. This sequence in the 3rd section; belongs to the shikimate kinase family. It in the 4th section; belongs to the type-I 3-dehydroquinase family. The protein in the C-terminal section; belongs to the shikimate dehydrogenase family. As to quaternary structure, homodimer. The cofactor is Zn(2+).

It localises to the cytoplasm. The enzyme catalyses 7-phospho-2-dehydro-3-deoxy-D-arabino-heptonate = 3-dehydroquinate + phosphate. It catalyses the reaction 3-dehydroquinate = 3-dehydroshikimate + H2O. It carries out the reaction shikimate + NADP(+) = 3-dehydroshikimate + NADPH + H(+). The catalysed reaction is shikimate + ATP = 3-phosphoshikimate + ADP + H(+). The enzyme catalyses 3-phosphoshikimate + phosphoenolpyruvate = 5-O-(1-carboxyvinyl)-3-phosphoshikimate + phosphate. It functions in the pathway metabolic intermediate biosynthesis; chorismate biosynthesis; chorismate from D-erythrose 4-phosphate and phosphoenolpyruvate: step 2/7. It participates in metabolic intermediate biosynthesis; chorismate biosynthesis; chorismate from D-erythrose 4-phosphate and phosphoenolpyruvate: step 3/7. Its pathway is metabolic intermediate biosynthesis; chorismate biosynthesis; chorismate from D-erythrose 4-phosphate and phosphoenolpyruvate: step 4/7. The protein operates within metabolic intermediate biosynthesis; chorismate biosynthesis; chorismate from D-erythrose 4-phosphate and phosphoenolpyruvate: step 5/7. It functions in the pathway metabolic intermediate biosynthesis; chorismate biosynthesis; chorismate from D-erythrose 4-phosphate and phosphoenolpyruvate: step 6/7. Functionally, the AROM polypeptide catalyzes 5 consecutive enzymatic reactions in prechorismate polyaromatic amino acid biosynthesis. In Ajellomyces dermatitidis (strain ER-3 / ATCC MYA-2586) (Blastomyces dermatitidis), this protein is Pentafunctional AROM polypeptide.